Here is a 99-residue protein sequence, read N- to C-terminus: A-type ATP synthase subunit F (99 aa).

This sequence belongs to the V-ATPase F subunit family. As to quaternary structure, has multiple subunits with at least A(3), B(3), C, D, E, F, H, I and proteolipid K(x).

It localises to the cell membrane. Its function is as follows. Component of the A-type ATP synthase that produces ATP from ADP in the presence of a proton gradient across the membrane. This Methanococcus aeolicus (strain ATCC BAA-1280 / DSM 17508 / OCM 812 / Nankai-3) protein is A-type ATP synthase subunit F.